The chain runs to 70 residues: Protein SlyX homolog (70 aa).

This sequence belongs to the SlyX family.

This Shewanella frigidimarina (strain NCIMB 400) protein is Protein SlyX homolog.